The chain runs to 912 residues: Serine/threonine-protein kinase D1 (912 aa).

At tyrosine 95 the chain carries Phosphotyrosine. Residues 146-196 form a Phorbol-ester/DAG-type 1 zinc finger; it reads PHALFVHSYRAPAFCDHCGEMLWGLVRQGLKCEGCGLNYHKRCAFKIPNNC. Residues serine 205, serine 208, serine 219, and serine 223 each carry the phosphoserine modification. The Phorbol-ester/DAG-type 2 zinc-finger motif lies at 270-320; sequence PHTFVIHSYTRPTVCQYCKKLLKGLFRQGLQCKDCRFNCHKRCAPKVPNNC. Serine 345 is modified (phosphoserine). The tract at residues 377 to 402 is disordered; it reads NDSGEMQDPDPDHEDANRTISPSTSN. Phosphoserine; by MAPK13 is present on residues serine 397 and serine 401. Residues 422–541 form the PH domain; that stretch reads TVMKEGWMVH…WEIAIQHALM (120 aa). Tyrosine 432 carries the post-translational modification Phosphotyrosine. Serine 448 carries the post-translational modification Phosphoserine. Residue tyrosine 463 is modified to Phosphotyrosine; by ABL. Serine 473 is modified (phosphoserine). Phosphotyrosine is present on tyrosine 502. Position 548 is a phosphoserine (serine 548). The region spanning 583-839 is the Protein kinase domain; that stretch reads IFPDEVLGSG…VDKTLSHPWL (257 aa). Residues 589–597 and lysine 612 each bind ATP; that span reads LGSGQFGIV. Aspartate 706 serves as the catalytic Proton acceptor. At serine 738 the chain carries Phosphoserine; by PKC/PRKCD. A Phosphoserine; by autocatalysis and PKC/PRKCD modification is found at serine 742. A Phosphotyrosine modification is found at tyrosine 749. Serine 910 bears the Phosphoserine; by autocatalysis mark.

It belongs to the protein kinase superfamily. CAMK Ser/Thr protein kinase family. PKD subfamily. In terms of assembly, interacts (via N-terminus) with ADAP1/CENTA1. Interacts with MAPK13. Interacts with DAPK1 in an oxidative stress-regulated manner. Interacts with USP28; the interaction induces phosphorylation of USP28 and activated KRAS-mediated stabilization of ZNF304. Interacts with AKAP13 (via C-terminal domain). The cofactor is Mg(2+). Phosphorylated at Ser-397 and Ser-401 by MAPK13 during regulation of insulin secretion in pancreatic beta cells. Phosphorylated by DAPK1. Phosphorylated at Tyr-95 and by ABL at Tyr-463, which primes the kinase in response to oxidative stress, and promotes a second step activating phosphorylation at Ser-738/Ser-742 by PKRD. Phosphorylated on Ser-910 upon S.enterica infection in macrophages.

Its subcellular location is the cytoplasm. It localises to the cell membrane. It is found in the golgi apparatus. The protein resides in the trans-Golgi network. It carries out the reaction L-seryl-[protein] + ATP = O-phospho-L-seryl-[protein] + ADP + H(+). It catalyses the reaction L-threonyl-[protein] + ATP = O-phospho-L-threonyl-[protein] + ADP + H(+). With respect to regulation, activated by DAG and phorbol esters. Phorbol-ester/DAG-type domain 1 binds DAG with high affinity and appears to play the dominant role in mediating translocation to the cell membrane and trans-Golgi network. Phorbol-ester/DAG-type domain 2 binds phorbol ester with higher affinity. Autophosphorylation of Ser-742 and phosphorylation of Ser-738 by PKC relieves auto-inhibition by the PH domain. Phosphorylation on Tyr-463 by the SRC-ABL1 pathway in response to oxidative stress, is also required for activation. Activated by DAPK1 under oxidative stress. In terms of biological role, serine/threonine-protein kinase that converts transient diacylglycerol (DAG) signals into prolonged physiological effects downstream of PKC, and is involved in the regulation of MAPK8/JNK1 and Ras signaling, Golgi membrane integrity and trafficking, cell survival through NF-kappa-B activation, cell migration, cell differentiation by mediating HDAC7 nuclear export, cell proliferation via MAPK1/3 (ERK1/2) signaling, and plays a role in cardiac hypertrophy, VEGFA-induced angiogenesis, genotoxic-induced apoptosis and flagellin-stimulated inflammatory response. Phosphorylates the epidermal growth factor receptor (EGFR) on dual threonine residues, which leads to the suppression of epidermal growth factor (EGF)-induced MAPK8/JNK1 activation and subsequent JUN phosphorylation. Phosphorylates RIN1, inducing RIN1 binding to 14-3-3 proteins YWHAB, YWHAE and YWHAZ and increased competition with RAF1 for binding to GTP-bound form of Ras proteins (NRAS, HRAS and KRAS). Acts downstream of the heterotrimeric G-protein beta/gamma-subunit complex to maintain the structural integrity of the Golgi membranes, and is required for protein transport along the secretory pathway. In the trans-Golgi network (TGN), regulates the fission of transport vesicles that are on their way to the plasma membrane. May act by activating the lipid kinase phosphatidylinositol 4-kinase beta (PI4KB) at the TGN for the local synthesis of phosphorylated inositol lipids, which induces a sequential production of DAG, phosphatidic acid (PA) and lyso-PA (LPA) that are necessary for membrane fission and generation of specific transport carriers to the cell surface. Under oxidative stress, is phosphorylated at Tyr-463 via SRC-ABL1 and contributes to cell survival by activating IKK complex and subsequent nuclear translocation and activation of NFKB1. Involved in cell migration by regulating integrin alpha-5/beta-3 recycling and promoting its recruitment in newly forming focal adhesion. In osteoblast differentiation, mediates the bone morphogenetic protein 2 (BMP2)-induced nuclear export of HDAC7, which results in the inhibition of HDAC7 transcriptional repression of RUNX2. In neurons, plays an important role in neuronal polarity by regulating the biogenesis of TGN-derived dendritic vesicles, and is involved in the maintenance of dendritic arborization and Golgi structure in hippocampal cells. May potentiate mitogenesis induced by the neuropeptide bombesin or vasopressin by mediating an increase in the duration of MAPK1/3 (ERK1/2) signaling, which leads to accumulation of immediate-early gene products including FOS that stimulate cell cycle progression. Plays an important role in the proliferative response induced by low calcium in keratinocytes, through sustained activation of MAPK1/3 (ERK1/2) pathway. Downstream of novel PKC signaling, plays a role in cardiac hypertrophy by phosphorylating HDAC5, which in turn triggers XPO1/CRM1-dependent nuclear export of HDAC5, MEF2A transcriptional activation and induction of downstream target genes that promote myocyte hypertrophy and pathological cardiac remodeling. Mediates cardiac troponin I (TNNI3) phosphorylation at the PKA sites, which results in reduced myofilament calcium sensitivity, and accelerated crossbridge cycling kinetics. The PRKD1-HDAC5 pathway is also involved in angiogenesis by mediating VEGFA-induced specific subset of gene expression, cell migration, and tube formation. In response to VEGFA, is necessary and required for HDAC7 phosphorylation which induces HDAC7 nuclear export and endothelial cell proliferation and migration. During apoptosis induced by cytarabine and other genotoxic agents, PRKD1 is cleaved by caspase-3 at Asp-378, resulting in activation of its kinase function and increased sensitivity of cells to the cytotoxic effects of genotoxic agents. In epithelial cells, is required for transducing flagellin-stimulated inflammatory responses by binding and phosphorylating TLR5, which contributes to MAPK14/p38 activation and production of inflammatory cytokines. Acts as an activator of NLRP3 inflammasome assembly by mediating phosphorylation of NLRP3. May play a role in inflammatory response by mediating activation of NF-kappa-B. May be involved in pain transmission by directly modulating TRPV1 receptor. Plays a role in activated KRAS-mediated stabilization of ZNF304 in colorectal cancer (CRC) cells. Regulates nuclear translocation of transcription factor TFEB in macrophages upon live S.enterica infection. In Homo sapiens (Human), this protein is Serine/threonine-protein kinase D1 (PRKD1).